Here is a 1213-residue protein sequence, read N- to C-terminus: A disintegrin and metalloproteinase with thrombospondin motifs 2 (1213 aa).

An N-terminal signal peptide occupies residues 1–28; it reads MDPPAGAARRLLCPALLLLLLPPPPLLL. The propeptide occupies 29-260; it reads LPPPPASVRL…INSSRRRVRR (232 aa). Asn111 carries an N-linked (GlcNAc...) asparagine glycan. The disordered stretch occupies residues 211–232; the sequence is YRRPPTPKPPPVSEPQALDTGV. Pro residues predominate over residues 214 to 223; it reads PPTPKPPPVS. Asn252 carries N-linked (GlcNAc...) asparagine glycosylation. The Peptidase M12B domain maps to 267 to 471; sequence YNIEVLLGVD…HSYDCLRDDP (205 aa). 10 disulfides stabilise this stretch: Cys344–Cys393, Cys387–Cys466, Cys426–Cys452, Cys493–Cys518, Cys504–Cys527, Cys513–Cys546, Cys540–Cys551, Cys574–Cys611, Cys578–Cys616, and Cys589–Cys601. Position 409 (His409) interacts with Zn(2+). Glu410 is an active-site residue. Zn(2+) contacts are provided by His413 and His419. Residues 480–560 form the Disintegrin domain; it reads PQLPGLHYSM…CIWLTPDILK (81 aa). One can recognise a TSP type-1 1 domain in the interval 561-617; that stretch reads RDGNWGAWTPFGSCSRTCGTGVKFRTRQCDNPHPANGGRTCSGLAYDFQLCNPQDCP. Positions 692–694 match the Cell attachment site motif; that stretch reads RGD. Residues 723 to 851 are spacer; that stretch reads CKVVKGTFTR…LNVDDNNVLE (129 aa). 3 TSP type-1 domains span residues 855-913, 915-975, and 976-1030; these read VRHE…NPQE, SQPV…NREL, and CPGR…APCP. Asn949, Asn950, and Asn994 each carry an N-linked (GlcNAc...) asparagine glycan. 3 disulfides stabilise this stretch: Cys988/Cys1024, Cys992/Cys1029, and Cys1003/Cys1013. A glycan (N-linked (GlcNAc...) asparagine) is linked at Asn1032. A PLAC domain is found at 1060 to 1098; that stretch reads SKDQCQGDKSMFCRMEVLSRYCSIPSYNKLCCKSCNPPR. Asn1099, Asn1147, and Asn1152 each carry an N-linked (GlcNAc...) asparagine glycan.

May belong to a multimeric complex. Binds specifically to collagen type XIV. It depends on Zn(2+) as a cofactor. In terms of processing, the precursor is cleaved by a furin endopeptidase. Post-translationally, glycosylated. Can be O-fucosylated by POFUT2 on a serine or a threonine residue found within the consensus sequence C1-X(2)-(S/T)-C2-G of the TSP type-1 repeat domains where C1 and C2 are the first and second cysteine residue of the repeat, respectively. Fucosylated repeats can then be further glycosylated by the addition of a beta-1,3-glucose residue by the glucosyltransferase, B3GALTL. Fucosylation mediates the efficient secretion of ADAMTS family members. Can also be C-glycosylated with one or two mannose molecules on tryptophan residues within the consensus sequence W-X-X-W of the TPRs, and N-glycosylated. These other glycosylations can also facilitate secretion.

Its subcellular location is the secreted. The protein localises to the extracellular space. It localises to the extracellular matrix. It carries out the reaction Cleaves the N-propeptide of collagen chain alpha1(I) at Pro-|-Gln and of alpha1(II) and alpha2(I) at Ala-|-Gln.. Cleaves the propeptides of type I and II collagen prior to fibril assembly. Does not act on type III collagen. Cleaves lysyl oxidase LOX at a site downstream of its propeptide cleavage site to produce a short LOX form with reduced collagen-binding activity. The sequence is that of A disintegrin and metalloproteinase with thrombospondin motifs 2 (Adamts2) from Mus musculus (Mouse).